A 559-amino-acid chain; its full sequence is Cytoplasmic polyadenylation element-binding protein 1 (559 aa).

The interval 223-244 is disordered; that stretch reads RLDHSSSPLTPPPSATSSGGLS. 2 consecutive RRM domains span residues 304-401 and 423-504; these read CKVF…DAQV and NTVF…PYLE. Zn(2+) is bound by residues Cys508, Cys511, Cys520, Cys525, Cys530, Cys533, His538, and His546.

It belongs to the RRM CPEB family. In terms of assembly, interacts with kinesin, dynein, APLP1, APLP2, TENT2/GLD2 and APP. Both phosphorylated and non phosphorylated forms interact with APLP1. Interacts with TENT4B; the interaction is required for TENT4B-mediated translational control.

The protein resides in the cytoplasm. In terms of biological role, sequence-specific RNA-binding protein that regulates mRNA cytoplasmic polyadenylation and translation initiation during oocyte maturation and early development. Binds to the cytoplasmic polyadenylation element (CPE), an uridine-rich sequence element (consensus sequence 5'-UUUUUAU-3') within the mRNA 3'-UTR. This is Cytoplasmic polyadenylation element-binding protein 1 (cpeb1) from Carassius auratus (Goldfish).